The chain runs to 538 residues: CTP synthase (538 aa).

Residues 1-270 are amidoligase domain; it reads MSRTKFIFVT…DEVVLKTMGM (270 aa). S15 is a binding site for CTP. Residue S15 coordinates UTP. Position 16 to 21 (16 to 21) interacts with ATP; the sequence is SLGKGV. Y56 is an L-glutamine binding site. D73 is an ATP binding site. Mg(2+) contacts are provided by D73 and E143. CTP is bound by residues 150–152, 190–195, and K226; these read DIE and KTKPTQ. Residues 190 to 195 and K226 contribute to the UTP site; that span reads KTKPTQ. One can recognise a Glutamine amidotransferase type-1 domain in the interval 295 to 537; the sequence is QIAVVGKYIS…IRASVKYSKK (243 aa). Residue G357 coordinates L-glutamine. The Nucleophile; for glutamine hydrolysis role is filled by C384. Residues 385–388, E408, and R465 each bind L-glutamine; that span reads LGMQ. Residues H510 and E512 contribute to the active site.

This sequence belongs to the CTP synthase family. In terms of assembly, homotetramer.

The enzyme catalyses UTP + L-glutamine + ATP + H2O = CTP + L-glutamate + ADP + phosphate + 2 H(+). The catalysed reaction is L-glutamine + H2O = L-glutamate + NH4(+). It catalyses the reaction UTP + NH4(+) + ATP = CTP + ADP + phosphate + 2 H(+). Its pathway is pyrimidine metabolism; CTP biosynthesis via de novo pathway; CTP from UDP: step 2/2. With respect to regulation, allosterically activated by GTP, when glutamine is the substrate; GTP has no effect on the reaction when ammonia is the substrate. The allosteric effector GTP functions by stabilizing the protein conformation that binds the tetrahedral intermediate(s) formed during glutamine hydrolysis. Inhibited by the product CTP, via allosteric rather than competitive inhibition. In terms of biological role, catalyzes the ATP-dependent amination of UTP to CTP with either L-glutamine or ammonia as the source of nitrogen. Regulates intracellular CTP levels through interactions with the four ribonucleotide triphosphates. This Leptospira interrogans serogroup Icterohaemorrhagiae serovar copenhageni (strain Fiocruz L1-130) protein is CTP synthase.